The chain runs to 311 residues: MSQNQEFSKKEIYNLNKLQKRLRRNVGEAIADFNMIEDGDRIMVCLSGGKDSYTMLEILRNLQQSAPISFSLVAVNLDQKQPGFPEHILPEYLEKLGVEYKIVEENTYGIVKEKIPEGKTTCSLCSRLRRGILYRTATELGATKIALGHHRDDILQTLFLNMFYGGKMKGMPPKLMSDDGKHIVIRPLAYCREKDIQRFADAKAFPIIPCNLCGSQPNLQRQVIADMLRDWDKRYPGRIETMFSAMQNVVPSHLCDTNLFDFKGIKHGFEVINGGDLAFDREELPLQPAGWQPEDDENQLDELRLNVVEVK.

Positions 47 to 52 match the PP-loop motif motif; it reads SGGKDS. [4Fe-4S] cluster-binding residues include cysteine 122, cysteine 125, and cysteine 213.

This sequence belongs to the TtcA family. As to quaternary structure, homodimer. It depends on Mg(2+) as a cofactor. [4Fe-4S] cluster is required as a cofactor.

The protein localises to the cytoplasm. The enzyme catalyses cytidine(32) in tRNA + S-sulfanyl-L-cysteinyl-[cysteine desulfurase] + AH2 + ATP = 2-thiocytidine(32) in tRNA + L-cysteinyl-[cysteine desulfurase] + A + AMP + diphosphate + H(+). It functions in the pathway tRNA modification. Functionally, catalyzes the ATP-dependent 2-thiolation of cytidine in position 32 of tRNA, to form 2-thiocytidine (s(2)C32). The sulfur atoms are provided by the cysteine/cysteine desulfurase (IscS) system. This is tRNA-cytidine(32) 2-sulfurtransferase from Escherichia fergusonii (strain ATCC 35469 / DSM 13698 / CCUG 18766 / IAM 14443 / JCM 21226 / LMG 7866 / NBRC 102419 / NCTC 12128 / CDC 0568-73).